A 343-amino-acid polypeptide reads, in one-letter code: 4-hydroxy-2-oxovalerate aldolase 1 (343 aa).

Positions I8 to S260 constitute a Pyruvate carboxyltransferase domain. R16 to D17 serves as a coordination point for substrate. D17 lines the Mn(2+) pocket. Residue H20 is the Proton acceptor of the active site. The substrate site is built by S170 and H199. 2 residues coordinate Mn(2+): H199 and H201. Residue Y290 coordinates substrate.

This sequence belongs to the 4-hydroxy-2-oxovalerate aldolase family.

The catalysed reaction is (S)-4-hydroxy-2-oxopentanoate = acetaldehyde + pyruvate. In Burkholderia cenocepacia (strain ATCC BAA-245 / DSM 16553 / LMG 16656 / NCTC 13227 / J2315 / CF5610) (Burkholderia cepacia (strain J2315)), this protein is 4-hydroxy-2-oxovalerate aldolase 1 (bphI).